Consider the following 157-residue polypeptide: Neutrophil recruitment protein (157 aa).

An N-terminal signal peptide occupies residues methionine 1–alanine 19.

The protein belongs to the PBP/GOBP family. In terms of assembly, interacts with mouse TLR1; the interaction promotes activation of canonical NF-kappa-B signaling in host macrophages. Interacts with human TLR1. Interacts with mouse TLR4; the interaction promotes activation of canonical NF-kappa-B signaling in host macrophages. Interacts with human TLR4. In terms of tissue distribution, female salivary gland (at protein level).

It localises to the secreted. Functionally, activates MyD88-dependent canonical NF-kappa-B signaling in host macrophages via interaction with host TLR1 and TLR4; this drives the expression of neutrophil chemoattractants, followed by the subsequent influx of neutrophils and recruitment of myeloid cells at the bite site. Its function is as follows. (Microbial infection) Promotes Zika virus infection in mouse model by facilitating recruitment of flavivirus-permissive myeloid cells at the bite site. (Microbial infection) Promotes dengue virus infection in mouse model by facilitating recruitment of flavivirus-permissive myeloid cells at the bite site. The polypeptide is Neutrophil recruitment protein (Aedes aegypti (Yellowfever mosquito)).